A 162-amino-acid chain; its full sequence is Catabolic 3-dehydroquinase (162 aa).

Catalysis depends on Tyr-24, which acts as the Proton acceptor. Substrate contacts are provided by Asn-88, His-94, and Asp-101. Residue His-114 is the Proton donor of the active site. Substrate-binding positions include Val-115 to Ser-116 and Arg-125.

Belongs to the type-II 3-dehydroquinase family. In terms of assembly, homododecamer. Adopts a ring-like structure, composed of an arrangement of two hexameric rings stacked on top of one another.

The catalysed reaction is 3-dehydroquinate = 3-dehydroshikimate + H2O. The protein operates within aromatic compound metabolism; 3,4-dihydroxybenzoate biosynthesis; 3,4-dihydroxybenzoate from 3-dehydroquinate: step 1/2. Is involved in the catabolism of quinate. Allows the utilization of quinate as carbon source via the beta-ketoadipate pathway. This chain is Catabolic 3-dehydroquinase, found in Podospora anserina (strain S / ATCC MYA-4624 / DSM 980 / FGSC 10383) (Pleurage anserina).